The primary structure comprises 326 residues: Putative ubiquitin-conjugating enzyme E2 38 (326 aa).

The UBC core domain maps to Asn54–Val214. Residue Cys140 is the Glycyl thioester intermediate of the active site. The interval Leu297–Arg326 is disordered. A compositionally biased stretch (basic residues) spans Lys315–Arg326.

It belongs to the ubiquitin-conjugating enzyme family.

The enzyme catalyses S-ubiquitinyl-[E1 ubiquitin-activating enzyme]-L-cysteine + [E2 ubiquitin-conjugating enzyme]-L-cysteine = [E1 ubiquitin-activating enzyme]-L-cysteine + S-ubiquitinyl-[E2 ubiquitin-conjugating enzyme]-L-cysteine.. Its pathway is protein modification; protein ubiquitination. Accepts the ubiquitin from the E1 complex and catalyzes its covalent attachment to other proteins. This chain is Putative ubiquitin-conjugating enzyme E2 38 (UBC38), found in Arabidopsis thaliana (Mouse-ear cress).